A 767-amino-acid polypeptide reads, in one-letter code: U3 small nucleolar RNA-associated protein 14 homolog A (767 aa).

Residues 23–49 are disordered; that stretch reads TSNYPLSASEDEGDSDGERKHQKLLEA. Residues serine 29, serine 31, serine 37, serine 52, serine 77, and serine 81 each carry the phosphoserine modification. Lysine 122 participates in a covalent cross-link: Glycyl lysine isopeptide (Lys-Gly) (interchain with G-Cter in SUMO2). Position 205 is a phosphothreonine (threonine 205). Residues 317–346 adopt a coiled-coil conformation; that stretch reads LEARQAMQEQLAKNKELTQKLQVVSESEEE. Positions 338–554 are disordered; sequence QVVSESEEEG…SKGKNKKEQM (217 aa). The span at 342 to 355 shows a compositional bias: acidic residues; that stretch reads ESEEEGGADEEEAL. Residues 398-433 are compositionally biased toward basic and acidic residues; it reads AAHEFPENEENDKPVAEEDELLKELEKRRSLRKRSE. Arginine 431 carries the citrulline modification. A Glycyl lysine isopeptide (Lys-Gly) (interchain with G-Cter in SUMO2) cross-link involves residue lysine 447. Residue serine 451 is modified to Phosphoserine. The segment covering 486-498 has biased composition (acidic residues); it reads VWEEEPAPEEDEP. The span at 503–538 shows a compositional bias: basic and acidic residues; the sequence is RPERMRTLEELEELGKEDSLPNKERPRPSVEGEQVR. Residue lysine 518 forms a Glycyl lysine isopeptide (Lys-Gly) (interchain with G-Cter in SUMO2) linkage. The residue at position 586 (arginine 586) is a Citrulline. The interval 730 to 767 is disordered; the sequence is TAEDVDCRSSPRSDVPVMQSNPKQHSKHQKQRKKSSIG. Over residues 753–767 the composition is skewed to basic residues; the sequence is QHSKHQKQRKKSSIG.

Belongs to the UTP14 family. Interacts with DHX37. In terms of processing, citrullinated by PADI4. In terms of tissue distribution, ubiquitously expressed.

The protein localises to the nucleus. The protein resides in the nucleolus. May be required for ribosome biogenesis. The protein is U3 small nucleolar RNA-associated protein 14 homolog A (Utp14a) of Mus musculus (Mouse).